Here is a 108-residue protein sequence, read N- to C-terminus: Peptidyl-prolyl cis-trans isomerase FKBP1B (108 aa).

The PPIase FKBP-type domain maps to Gly20–Glu108.

The protein belongs to the FKBP-type PPIase family. FKBP1 subfamily. As to quaternary structure, identified in a complex composed of RYR2, FKBP1B, PKA catalytic subunit, PRKAR2A, AKAP6, and the protein phosphatases PP2A and PP1. Interacts directly with RYR2. Detected in heart muscle (at protein level). Ubiquitous.

It localises to the cytoplasm. The protein resides in the sarcoplasmic reticulum. It catalyses the reaction [protein]-peptidylproline (omega=180) = [protein]-peptidylproline (omega=0). Inhibited by both FK506 and rapamycin. In terms of biological role, has the potential to contribute to the immunosuppressive and toxic effects of FK506 and rapamycin. PPIases accelerate the folding of proteins. It catalyzes the cis-trans isomerization of proline imidic peptide bonds in oligopeptides. In Rattus norvegicus (Rat), this protein is Peptidyl-prolyl cis-trans isomerase FKBP1B (Fkbp1b).